Reading from the N-terminus, the 721-residue chain is BBSome complex member BBS2 (721 aa).

Positions R325–E369 form a coiled coil.

Part of BBSome complex, that contains BBS1, BBS2, BBS4, BBS5, BBS7, BBS8/TTC8, BBS9 and BBIP10. Interacts (via C-terminus) with BBS7. Interacts (via coiled coil domain) with MKKS. Interacts with CCDC28B and ALDOB. Interacts with DLEC1. As to expression, widely expressed.

It is found in the cell projection. Its subcellular location is the cilium membrane. The protein localises to the cytoplasm. The protein resides in the cytoskeleton. It localises to the microtubule organizing center. It is found in the centrosome. Its subcellular location is the centriolar satellite. The BBSome complex is thought to function as a coat complex required for sorting of specific membrane proteins to the primary cilia. The BBSome complex is required for ciliogenesis but is dispensable for centriolar satellite function. This ciliogenic function is mediated in part by the Rab8 GDP/GTP exchange factor, which localizes to the basal body and contacts the BBSome. Rab8(GTP) enters the primary cilium and promotes extension of the ciliary membrane. Firstly the BBSome associates with the ciliary membrane and binds to RAB3IP/Rabin8, the guanosyl exchange factor (GEF) for Rab8 and then the Rab8-GTP localizes to the cilium and promotes docking and fusion of carrier vesicles to the base of the ciliary membrane. The BBSome complex, together with the LTZL1, controls SMO ciliary trafficking and contributes to the sonic hedgehog (SHH) pathway regulation. Required for proper BBSome complex assembly and its ciliary localization. This is BBSome complex member BBS2 from Homo sapiens (Human).